A 580-amino-acid chain; its full sequence is Amino-acid acetyltransferase, mitochondrial (580 aa).

The region spanning leucine 403–aspartate 560 is the N-acetyltransferase domain.

The protein belongs to the acetyltransferase family.

The protein localises to the mitochondrion. It carries out the reaction L-glutamate + acetyl-CoA = N-acetyl-L-glutamate + CoA + H(+). The protein operates within amino-acid biosynthesis; L-arginine biosynthesis; N(2)-acetyl-L-ornithine from L-glutamate: step 1/4. In terms of biological role, N-acetylglutamate synthase involved in arginine biosynthesis. This Candida albicans (strain SC5314 / ATCC MYA-2876) (Yeast) protein is Amino-acid acetyltransferase, mitochondrial (ARG2).